Here is a 192-residue protein sequence, read N- to C-terminus: Ion-translocating oxidoreductase complex subunit A (192 aa).

6 helical membrane-spanning segments follow: residues 5-25, 39-59, 67-87, 102-122, 134-154, and 171-191; these read ILLL…FLGL, IGMG…AYLV, LGIE…VVQF, LLGI…VALL, IIYG…FASM, and SIAM…TGLV.

It belongs to the NqrDE/RnfAE family. The complex is composed of six subunits: RnfA, RnfB, RnfC, RnfD, RnfE and RnfG.

The protein localises to the cell inner membrane. In terms of biological role, part of a membrane-bound complex that couples electron transfer with translocation of ions across the membrane. The chain is Ion-translocating oxidoreductase complex subunit A from Vibrio campbellii (strain ATCC BAA-1116).